Here is a 112-residue protein sequence, read N- to C-terminus: Large ribosomal subunit protein bL17 (112 aa).

Belongs to the bacterial ribosomal protein bL17 family. As to quaternary structure, part of the 50S ribosomal subunit. Contacts protein L32.

The polypeptide is Large ribosomal subunit protein bL17 (Desulforudis audaxviator (strain MP104C)).